Consider the following 491-residue polypeptide: Aspartyl/glutamyl-tRNA(Asn/Gln) amidotransferase subunit B (491 aa).

This sequence belongs to the GatB/GatE family. GatB subfamily. Heterotrimer of A, B and C subunits.

The catalysed reaction is L-glutamyl-tRNA(Gln) + L-glutamine + ATP + H2O = L-glutaminyl-tRNA(Gln) + L-glutamate + ADP + phosphate + H(+). It catalyses the reaction L-aspartyl-tRNA(Asn) + L-glutamine + ATP + H2O = L-asparaginyl-tRNA(Asn) + L-glutamate + ADP + phosphate + 2 H(+). In terms of biological role, allows the formation of correctly charged Asn-tRNA(Asn) or Gln-tRNA(Gln) through the transamidation of misacylated Asp-tRNA(Asn) or Glu-tRNA(Gln) in organisms which lack either or both of asparaginyl-tRNA or glutaminyl-tRNA synthetases. The reaction takes place in the presence of glutamine and ATP through an activated phospho-Asp-tRNA(Asn) or phospho-Glu-tRNA(Gln). The polypeptide is Aspartyl/glutamyl-tRNA(Asn/Gln) amidotransferase subunit B (Trichormus variabilis (strain ATCC 29413 / PCC 7937) (Anabaena variabilis)).